The following is an 83-amino-acid chain: Putative defensin-like protein 111 (83 aa).

The signal sequence occupies residues 1–24 (MAITKKILLPFVLTILFVISSVHC). 4 disulfides stabilise this stretch: Cys-40–Cys-80, Cys-46–Cys-69, Cys-54–Cys-78, and Cys-58–Cys-79.

It belongs to the DEFL family.

Its subcellular location is the secreted. The chain is Putative defensin-like protein 111 (LCR50) from Arabidopsis thaliana (Mouse-ear cress).